The chain runs to 577 residues: Aspartate--tRNA ligase (577 aa).

Glu-171 provides a ligand contact to L-aspartate. Residues 195–198 (QLFK) form an aspartate region. L-aspartate is bound at residue Arg-217. Residues 217–219 (RDE) and Gln-226 contribute to the ATP site. His-437 serves as a coordination point for L-aspartate. ATP is bound at residue Glu-472. Arg-479 contributes to the L-aspartate binding site. Position 524–527 (524–527 (GFDR)) interacts with ATP.

It belongs to the class-II aminoacyl-tRNA synthetase family. Type 1 subfamily. In terms of assembly, homodimer.

The protein resides in the cytoplasm. The enzyme catalyses tRNA(Asp) + L-aspartate + ATP = L-aspartyl-tRNA(Asp) + AMP + diphosphate. In terms of biological role, catalyzes the attachment of L-aspartate to tRNA(Asp) in a two-step reaction: L-aspartate is first activated by ATP to form Asp-AMP and then transferred to the acceptor end of tRNA(Asp). The polypeptide is Aspartate--tRNA ligase (Deinococcus deserti (strain DSM 17065 / CIP 109153 / LMG 22923 / VCD115)).